The primary structure comprises 444 residues: MAASTAAQVQLSEEALGLARIFENPKGSLEAASKLLQKNHDEFHVFWRDVGGHNHIPHSVLSILALGGGPAELQRAWDDGVAIQRPTPPLDEDVVKKLENPAEFRARIGSIPNYTNFLHFFRNQMDKKGWQAVVSEYAFSRTPLAETIFAQLFEGAYHPFIHIGFGIEFNLPSIIAEGLAQAATHDSAGIEGFFLEAERQAAQSKGPGKSLVQLLDEVRTTEKIKTAARLPDGPVRVRDGVIGRAGAEIAALASQFRVPADQLSRGAAESINISAYTAGAAQRAGKARKIDFFHMHNTTSSLFLTVFLNQPWISTEDKVRIVEWKGRLDLVWYAACSAPDLNVDHVIGYKPAQSAGWGWKELYEAINVAHDDGHLAKIVRALKNGEEVSRPFESGEGAEAFPIKGDSWLKLAQMSYDTTLDLPDDDKWIWGAGFLPLWNKVPSL.

The protein belongs to the questin oxidase family. NADPH serves as cofactor.

The protein operates within secondary metabolite biosynthesis. Its function is as follows. Baeyer-Villiger oxidase; part of the gene cluster that mediates the biosynthesis of pestheic acid, a diphenyl ether which is a biosynthetic precursor of the unique chloropupukeananes. The biosynthesis initiates from condensation of acetate and malonate units catalyzed by the non-reducing PKS ptaA. As the ptaA protein is TE/CLC domain-deficient, hydrolysis and Claisen cyclization of the polyketide could be catalyzed by ptaB containing a beta-lactamase domain. The ptaB protein might hydrolyze the thioester bond between the ACP of ptaA and the intermediate to release atrochrysone carboxylic acid, which is spontaneously dehydrated to form endocrocin anthrone. Endocrocin anthrone is then converted to endocrocin, catalyzed by the anthrone oxygenase ptaC. Spontaneous decarboxylation of endocrocin occurs to generate emodin. An O-methyltransferase (ptaH or ptaI) could methylate emodin to form physcion. PtaJ could then catalyze the oxidative cleavage of physcion, and rotation of the intermediate could then afford desmethylisosulochrin. PtaF, a putative NADH-dependent oxidoreductase, might also participate in the oxidative cleavage step. Desmethylisosulochrin is then transformed by another O-methyltransferase (ptaH or ptaI) to form isosulochrin. Chlorination of isosulochrin by ptaM in the cyclohexadienone B ring then produces chloroisosulochrin. PtaE is responsible for the oxidative coupling reactions of both benzophenones isosulouchrin and chloroisosulouchrin to RES-1214-1 and pestheic acid respectively, regardless of chlorination. This Pestalotiopsis fici (strain W106-1 / CGMCC3.15140) protein is Baeyer-Villiger oxidase ptaJ.